A 498-amino-acid chain; its full sequence is Trichoplein keratin filament-binding protein (498 aa).

A coiled-coil region spans residues 11–39 (CSQQRLNQQLARQREQEARLRQQWEQNSR). Residues Lys50 and Lys57 each participate in a glycyl lysine isopeptide (Lys-Gly) (interchain with G-Cter in ubiquitin) cross-link. 3 coiled-coil regions span residues 66–136 (AYQR…LIAE), 163–353 (VNSW…LREE), and 380–479 (LTGR…EAET). The interval 73 to 498 (KEEKRRSLEA…PYGHPKIAWN (426 aa)) is interaction with keratin proteins. Residues 167 to 189 (EMQKEEKKQQEATAEQENKRYEN) form a disordered region. The span at 168–189 (MQKEEKKQQEATAEQENKRYEN) shows a compositional bias: basic and acidic residues. The tract at residues 259–425 (KQMEAFRQKA…RELARREKEE (167 aa)) is trichohyalin/plectin homology domain. Residues 447-498 (QAWEADQQEEEEEEEARRVEQLSDALLQQEAETMAEQGYRPKPYGHPKIAWN) form a disordered region.

It belongs to the TCHP family. Interacts specifically with keratin proteins including, KRT5, KRT6A, KRT8, KRT14, KRT16 and KRT18. Interacts with KCTD17. In terms of processing, ubiquitinated. Ubiquitination by the BCR(KCTD17) E3 ubiquitin ligase complex results in proteasomal degradation, and induces ciliogenesis. In terms of tissue distribution, expressed at high levels in normal urothelial and breast epithelial cells. Also expressed in the smooth muscle and endothelial cells. Reduced expression seen in advanced bladder and breast carcinomas (at protein level). Ubiquitous. Expressed at highest levels in the heart, skeletal muscle, kidney, liver and testis.

It localises to the cytoplasm. Its subcellular location is the cytoskeleton. It is found in the cell membrane. The protein localises to the mitochondrion. The protein resides in the cell junction. It localises to the desmosome. Its subcellular location is the microtubule organizing center. It is found in the centrosome. In terms of biological role, tumor suppressor which has the ability to inhibit cell growth and be pro-apoptotic during cell stress. Inhibits cell growth in bladder and prostate cancer cells by a down-regulation of HSPB1 by inhibiting its phosphorylation. May act as a 'capping' or 'branching' protein for keratin filaments in the cell periphery. May regulate K8/K18 filament and desmosome organization mainly at the apical or peripheral regions of simple epithelial cells. Is a negative regulator of ciliogenesis. The sequence is that of Trichoplein keratin filament-binding protein from Homo sapiens (Human).